A 136-amino-acid polypeptide reads, in one-letter code: DNA-directed RNA polymerase subunit omega (136 aa).

The segment at 81-136 (EAEAVPLLSSSPAAAAVAPQSSGDDGDIQFDRMSEEDLLRGLENLAPPTETEDEGD) is disordered. Residues 83-99 (EAVPLLSSSPAAAAVAP) show a composition bias toward low complexity. Residues 109–120 (QFDRMSEEDLLR) are compositionally biased toward basic and acidic residues.

This sequence belongs to the RNA polymerase subunit omega family. As to quaternary structure, the RNAP catalytic core consists of 2 alpha, 1 beta, 1 beta' and 1 omega subunit. When a sigma factor is associated with the core the holoenzyme is formed, which can initiate transcription.

The enzyme catalyses RNA(n) + a ribonucleoside 5'-triphosphate = RNA(n+1) + diphosphate. Promotes RNA polymerase assembly. Latches the N- and C-terminal regions of the beta' subunit thereby facilitating its interaction with the beta and alpha subunits. The polypeptide is DNA-directed RNA polymerase subunit omega (Methylobacterium nodulans (strain LMG 21967 / CNCM I-2342 / ORS 2060)).